Here is a 568-residue protein sequence, read N- to C-terminus: Poly(A) polymerase (568 aa).

ATP contacts are provided by residues 87 to 89 (YGS), 99 to 102 (SDID), 100 to 102 (DID), Asp-154, Lys-215, Tyr-224, and 233 to 234 (GV). Asp-100, Asp-102, and Asp-154 together coordinate Mg(2+). Ser-452 and Ser-550 each carry phosphoserine. The tract at residues 525–568 (NEKRPSKKSKRKNLDARHETVKRSKSDAASGDNINGTTAAVDVN) is disordered. The segment covering 536–550 (KNLDARHETVKRSKS) has biased composition (basic and acidic residues).

The protein belongs to the poly(A) polymerase family. Component of the cleavage and polyadenylation factor (CPF) complex, which is composed of PTI1, SYC1, SSU72, GLC7, MPE1, REF2, PFS2, PTA1, YSH1/BRR5, SWD2, CFT2/YDH1, YTH1, CFT1/YHH1, FIP1 and PAP1. Interacts with FIR1 and RRP6. Requires Mg(2+) as cofactor. The cofactor is Mn(2+).

It is found in the nucleus. It carries out the reaction RNA(n) + ATP = RNA(n)-3'-adenine ribonucleotide + diphosphate. In terms of biological role, polymerase component of the cleavage and polyadenylation factor (CPF) complex, which plays a key role in polyadenylation-dependent pre-mRNA 3'-end formation and cooperates with cleavage factors including the CFIA complex and NAB4/CFIB. In Saccharomyces cerevisiae (strain ATCC 204508 / S288c) (Baker's yeast), this protein is Poly(A) polymerase (PAP1).